Consider the following 311-residue polypeptide: Malate dehydrogenase (311 aa).

Residues 7–13 (GAAGGIG) and Asp34 each bind NAD(+). Substrate-binding residues include Arg81 and Arg87. NAD(+) is bound by residues Asn94 and 117–119 (ITN). 2 residues coordinate substrate: Asn119 and Arg153. His177 functions as the Proton acceptor in the catalytic mechanism. Met227 provides a ligand contact to NAD(+).

Belongs to the LDH/MDH superfamily. MDH type 1 family. In terms of assembly, homodimer.

The catalysed reaction is (S)-malate + NAD(+) = oxaloacetate + NADH + H(+). In terms of biological role, catalyzes the reversible oxidation of malate to oxaloacetate. This Shewanella amazonensis (strain ATCC BAA-1098 / SB2B) protein is Malate dehydrogenase.